A 1024-amino-acid polypeptide reads, in one-letter code: Multidrug resistance protein MdtC (1024 aa).

12 consecutive transmembrane segments (helical) span residues 12–32 (VATT…FSLL), 333–353 (EVER…FLFL), 360–380 (LIPA…MYLC), 387–407 (LSLM…IVVL), 431–451 (VGFT…PLLL), 463–483 (FAVT…TLTP), 528–548 (WVMV…ISIP), 853–873 (LWLI…LYES), 875–895 (VHPL…LLAL), 897–917 (LFDA…IGIV), 953–973 (PILM…ISSG), and 984–1004 (ITIV…TPVV).

Belongs to the resistance-nodulation-cell division (RND) (TC 2.A.6) family. MdtC subfamily. As to quaternary structure, part of a tripartite efflux system composed of MdtA, MdtB and MdtC. MdtC forms a heteromultimer with MdtB.

It localises to the cell inner membrane. The chain is Multidrug resistance protein MdtC from Yersinia enterocolitica serotype O:8 / biotype 1B (strain NCTC 13174 / 8081).